A 559-amino-acid chain; its full sequence is DNA ligase (559 aa).

E247 provides a ligand contact to ATP. The active-site N6-AMP-lysine intermediate is K249. The ATP site is built by R254, R269, E299, F339, R414, and K420.

This sequence belongs to the ATP-dependent DNA ligase family. Monomer. It depends on Mg(2+) as a cofactor.

It catalyses the reaction ATP + (deoxyribonucleotide)n-3'-hydroxyl + 5'-phospho-(deoxyribonucleotide)m = (deoxyribonucleotide)n+m + AMP + diphosphate.. The catalysed reaction is NAD(+) + (deoxyribonucleotide)n-3'-hydroxyl + 5'-phospho-(deoxyribonucleotide)m = (deoxyribonucleotide)n+m + AMP + beta-nicotinamide D-nucleotide.. In terms of biological role, DNA ligase that seals nicks in double-stranded DNA during DNA replication, DNA recombination and DNA repair. Can also use NAD, but less efficiently than ATP. This is DNA ligase from Thermococcus kodakarensis (strain ATCC BAA-918 / JCM 12380 / KOD1) (Pyrococcus kodakaraensis (strain KOD1)).